The chain runs to 510 residues: Probable sphingolipid transporter spinster homolog 3 (510 aa).

The helical transmembrane segment at 44-64 (SSLSPVWLLVIFCIINLLNYM) threads the bilayer. N-linked (GlcNAc...) asparagine glycosylation is found at Asn75 and Asn98. The next 11 helical transmembrane spans lie at 106–126 (VLSS…ASLA), 136–156 (VWTI…IVLC), 158–178 (MFVG…IDDN), 185–205 (AAWL…GYVY), 219–239 (FWGE…MKPL), 298–318 (VFVV…AYSY), 336–356 (IFGA…GFIL), 369–387 (LLSG…AFTL), 392–414 (GFIA…VNYV), 430–450 (ISTV…VGIV), and 462–482 (LILT…KINL).

It belongs to the major facilitator superfamily. Spinster (TC 2.A.1.49) family.

It localises to the mitochondrion inner membrane. Functionally, probable sphingolipid transporter. In Arabidopsis thaliana (Mouse-ear cress), this protein is Probable sphingolipid transporter spinster homolog 3.